Consider the following 537-residue polypeptide: Glutamyl-tRNA reductase, chloroplastic (537 aa).

The N-terminal 48 residues, 1–48 (MMASTTSATAAGGAFAAAKTRAGSSAAGGGACARVAAGGRRRSGVVVR), are a transit peptide targeting the chloroplast. Substrate contacts are provided by residues 134–137 (TCNR), serine 194, 199–201 (EGQ), and glutamine 205. The active-site Nucleophile is the cysteine 135. An NADP(+)-binding site is contributed by 276–281 (GAGKMG).

This sequence belongs to the glutamyl-tRNA reductase family.

It is found in the plastid. The protein resides in the chloroplast. It carries out the reaction (S)-4-amino-5-oxopentanoate + tRNA(Glu) + NADP(+) = L-glutamyl-tRNA(Glu) + NADPH + H(+). Its pathway is porphyrin-containing compound metabolism; protoporphyrin-IX biosynthesis; 5-aminolevulinate from L-glutamyl-tRNA(Glu): step 1/2. Its function is as follows. Catalyzes the NADPH-dependent reduction of glutamyl-tRNA(Glu) to glutamate 1-semialdehyde (GSA). This Oryza sativa subsp. indica (Rice) protein is Glutamyl-tRNA reductase, chloroplastic.